A 504-amino-acid chain; its full sequence is Catalase (504 aa).

Active-site residues include His-56 and Asn-129. Position 339 (Tyr-339) interacts with heme.

It belongs to the catalase family. In terms of assembly, homodimer. Heme serves as cofactor.

It carries out the reaction 2 H2O2 = O2 + 2 H2O. Decomposes hydrogen peroxide into water and oxygen; serves to protect cells from the toxic effects of hydrogen peroxide. The chain is Catalase (katA) from Staphylococcus epidermidis.